A 371-amino-acid polypeptide reads, in one-letter code: Phosphate acyltransferase (371 aa).

It belongs to the PlsX family. In terms of assembly, homodimer. Probably interacts with PlsY.

It is found in the cytoplasm. It catalyses the reaction a fatty acyl-[ACP] + phosphate = an acyl phosphate + holo-[ACP]. It functions in the pathway lipid metabolism; phospholipid metabolism. Catalyzes the reversible formation of acyl-phosphate (acyl-PO(4)) from acyl-[acyl-carrier-protein] (acyl-ACP). This enzyme utilizes acyl-ACP as fatty acyl donor, but not acyl-CoA. This chain is Phosphate acyltransferase, found in Ruegeria pomeroyi (strain ATCC 700808 / DSM 15171 / DSS-3) (Silicibacter pomeroyi).